The chain runs to 170 residues: Adenine phosphoribosyltransferase (170 aa).

It belongs to the purine/pyrimidine phosphoribosyltransferase family. Homodimer.

It localises to the cytoplasm. It carries out the reaction AMP + diphosphate = 5-phospho-alpha-D-ribose 1-diphosphate + adenine. The protein operates within purine metabolism; AMP biosynthesis via salvage pathway; AMP from adenine: step 1/1. In terms of biological role, catalyzes a salvage reaction resulting in the formation of AMP, that is energically less costly than de novo synthesis. This chain is Adenine phosphoribosyltransferase, found in Cenarchaeum symbiosum (strain A).